The chain runs to 615 residues: Ankyrin repeat and LEM domain-containing protein 1 (615 aa).

ANK repeat units lie at residues 39–71 (DGAA…DPNA), 75–104 (EALT…DPAL), and 108–137 (DGLR…RTRT). The segment at 138–210 (RTRIGAETQE…DKHGSSASPP (73 aa)) is disordered. A Nuclear export signal motif is present at residues 271-280 (LNARLQALTL). Residues 283-294 (PNAAGFQSSPSS) are compositionally biased toward polar residues. The interval 283–315 (PNAAGFQSSPSSMPLLDRSPAHSPPRTPTPGAS) is disordered. The region spanning 355-399 (HLPVSTVSDLELLKGLRALGENPHPITPFTRQLYHQQLEEAQIAP) is the LEM domain. Positions 448–566 (KSSFTYLLLD…ALGIQTLTNQ (119 aa)) constitute a GIY-YIG domain. Residues 579–586 (PPARRRRL) carry the Nuclear localization signal motif.

As to quaternary structure, interacts (via LEM domain) with BANF1; the interaction may favor BANF1 dimerization. As to expression, expression is predominant in adult bone marrow.

It localises to the cytoplasm. The protein localises to the nucleus. Endonuclease that probably plays a role in the DNA damage response and DNA repair. The sequence is that of Ankyrin repeat and LEM domain-containing protein 1 (ANKLE1) from Homo sapiens (Human).